The chain runs to 76 residues: MLKELINKLLWHPGYNPEDYVIKYLHRGAENDEKSVPLQNIVIEDSFLFFDETHIPFHRILEIVNLKNGEILYKKR.

This sequence belongs to the UPF0248 family.

This is UPF0248 protein MmarC6_0667 from Methanococcus maripaludis (strain C6 / ATCC BAA-1332).